The primary structure comprises 522 residues: F-box only protein 7 (522 aa).

2 disordered regions span residues 1–20 (MKLRVRLQKRTQPLEVPESE) and 85–128 (PNLP…HGQV). Positions 1-88 (MKLRVRLQKR…EDEMPAPNLP (88 aa)) are ubiquitin-like. The segment covering 87 to 114 (LPSSTDSEHSSLQNNDQPPLAATSSQAN) has biased composition (polar residues). The important for interaction with PINK1 stretch occupies residues 92–129 (DSEHSSLQNNDQPPLAATSSQANIPDEQGSDSSHGQVT). The tract at residues 129 to 169 (TQYDAWTDDSMEGPSHSAEAVSIQDAMSVEEASGFHPLEPM) is important for interaction with CDK6. Positions 180–324 (PHSLEALYQS…PLLAFTRQVL (145 aa)) are important for dimerization and interaction with PSMF1. An F-box domain is found at 329 to 375 (VFGLVVLPLELKLRIFRLLDVHSVLALSAVCHDLLIASNDPLLWRCL). An important for interaction with CDK6 region spans residues 381–522 (RDSTIRGPDT…RSADNRLPYL (142 aa)). Omega-N-methylarginine is present on residues Arg431 and Arg451. The tract at residues 459-522 (DPVTSLIPRP…RSADNRLPYL (64 aa)) is disordered. The RFDP motif signature appears at 481-484 (RFDP). Position 518 is an asymmetric dimethylarginine (Arg518).

Part of the SCF (SKP1-CUL1-F-box) E3 ubiquitin-protein ligase complex SCF(FBXO7) formed of CUL1, SKP1, RBX1 and FBXO7. Interacts via its C-terminal proline-rich region with DLGAP5. Interacts with BIRC2. Interacts with CDK6 and promotes its interaction with D-type cyclin. Interacts (via the N-terminal Ubl domain) with PRKN. Interacts (via N-terminal region) with PINK1. Interacts with PSMF1.

It localises to the cytoplasm. The protein localises to the nucleus. Its subcellular location is the mitochondrion. The protein resides in the cytosol. It functions in the pathway protein modification; protein ubiquitination. Functionally, substrate recognition component of a SCF (SKP1-CUL1-F-box protein) E3 ubiquitin-protein ligase complex which mediates the ubiquitination and subsequent proteasomal degradation of target proteins and plays a role in several biological processes such as cell cycle, cell proliferation, or maintenance of chromosome stability. Recognizes and ubiquitinates BIRC2 and the cell cycle regulator DLGAP5. Plays a role downstream of PINK1 in the clearance of damaged mitochondria via selective autophagy (mitophagy) by targeting PRKN to dysfunctional depolarized mitochondria. Promotes MFN1 ubiquitination. Mediates the ubiquitination and proteasomal degradation of UXT isoform 2, thereby impairing the NF-kappa-B signaling pathway. Inhibits NF-kappa-B pathway also by promoting the ubiquitinatioin of TRAF2. Affects the assembly state and activity of the proteasome in the cells including neurons by ubiquitinating the proteasomal subunit PSMA2 via 'Lys-63'-linked polyubiquitin chains. Promotes 'Lys-48'-linked polyubiquitination SIRT7, leading to the hydrogen peroxide-induced cell death. The polypeptide is F-box only protein 7 (Fbxo7) (Rattus norvegicus (Rat)).